Here is a 112-residue protein sequence, read N- to C-terminus: UPF0212 protein Mhun_0078 (112 aa).

This sequence belongs to the UPF0212 family.

The protein is UPF0212 protein Mhun_0078 of Methanospirillum hungatei JF-1 (strain ATCC 27890 / DSM 864 / NBRC 100397 / JF-1).